The sequence spans 344 residues: Centromere protein L (344 aa).

A Phosphoserine modification is found at Ser39. A Phosphothreonine modification is found at Thr43. The residue at position 53 (Ser53) is a Phosphoserine.

It belongs to the CENP-L/IML3 family. As to quaternary structure, component of the CENPA-CAD complex, composed of CENPI, CENPK, CENPL, CENPO, CENPP, CENPQ, CENPR and CENPS. The CENPA-CAD complex interacts with the CENPA-NAC complex, at least composed of CENPA, CENPC, CENPH, CENPM, CENPN, CENPT and CENPU.

Its subcellular location is the nucleus. The protein resides in the chromosome. It is found in the centromere. Component of the CENPA-CAD (nucleosome distal) complex, a complex recruited to centromeres which is involved in assembly of kinetochore proteins, mitotic progression and chromosome segregation. May be involved in incorporation of newly synthesized CENPA into centromeres via its interaction with the CENPA-NAC complex. This Homo sapiens (Human) protein is Centromere protein L (CENPL).